We begin with the raw amino-acid sequence, 841 residues long: DNA ligase (841 aa).

NAD(+)-binding positions include 54 to 58 (DAEYD), 103 to 104 (SL), and E143. The active-site N6-AMP-lysine intermediate is the K145. R166, E203, K321, and K345 together coordinate NAD(+). The Zn(2+) site is built by C471, C474, C489, and C495. Residues 554-575 (KTVAESDQMPSEGSSVGASGKH) are disordered. A compositionally biased stretch (polar residues) spans 561 to 570 (QMPSEGSSVG). The region spanning 764–841 (GINKAVAGKT…SEAELLTLLG (78 aa)) is the BRCT domain.

The protein belongs to the NAD-dependent DNA ligase family. LigA subfamily. Mg(2+) serves as cofactor. Mn(2+) is required as a cofactor.

The enzyme catalyses NAD(+) + (deoxyribonucleotide)n-3'-hydroxyl + 5'-phospho-(deoxyribonucleotide)m = (deoxyribonucleotide)n+m + AMP + beta-nicotinamide D-nucleotide.. Functionally, DNA ligase that catalyzes the formation of phosphodiester linkages between 5'-phosphoryl and 3'-hydroxyl groups in double-stranded DNA using NAD as a coenzyme and as the energy source for the reaction. It is essential for DNA replication and repair of damaged DNA. The polypeptide is DNA ligase (Neisseria meningitidis serogroup C / serotype 2a (strain ATCC 700532 / DSM 15464 / FAM18)).